Consider the following 330-residue polypeptide: Glycerol-3-phosphate dehydrogenase [NAD(P)+] (330 aa).

Positions 10, 11, 31, and 104 each coordinate NADPH. Sn-glycerol 3-phosphate is bound by residues Lys-104, Gly-131, and Ser-133. NADPH is bound at residue Ala-135. Positions 186, 239, 249, 250, and 251 each coordinate sn-glycerol 3-phosphate. The Proton acceptor role is filled by Lys-186. Residue Arg-250 coordinates NADPH. Val-274 and Glu-276 together coordinate NADPH.

This sequence belongs to the NAD-dependent glycerol-3-phosphate dehydrogenase family.

It is found in the cytoplasm. The enzyme catalyses sn-glycerol 3-phosphate + NAD(+) = dihydroxyacetone phosphate + NADH + H(+). The catalysed reaction is sn-glycerol 3-phosphate + NADP(+) = dihydroxyacetone phosphate + NADPH + H(+). It participates in membrane lipid metabolism; glycerophospholipid metabolism. Its function is as follows. Catalyzes the reduction of the glycolytic intermediate dihydroxyacetone phosphate (DHAP) to sn-glycerol 3-phosphate (G3P), the key precursor for phospholipid synthesis. The protein is Glycerol-3-phosphate dehydrogenase [NAD(P)+] of Thermoanaerobacter sp. (strain X514).